Consider the following 316-residue polypeptide: Tyrosine--tRNA ligase 2 (316 aa).

The L-tyrosine site is built by tyrosine 26, tyrosine 146, glutamine 150, aspartate 153, and glutamine 168. The 'KMSKS' region motif lies at 219 to 223 (KMSKS). Lysine 222 serves as a coordination point for ATP.

The protein belongs to the class-I aminoacyl-tRNA synthetase family. TyrS type 4 subfamily. Homodimer.

Its subcellular location is the cytoplasm. It carries out the reaction tRNA(Tyr) + L-tyrosine + ATP = L-tyrosyl-tRNA(Tyr) + AMP + diphosphate + H(+). In terms of biological role, catalyzes the attachment of tyrosine to tRNA(Tyr) in a two-step reaction: tyrosine is first activated by ATP to form Tyr-AMP and then transferred to the acceptor end of tRNA(Tyr). This Pyrobaculum aerophilum (strain ATCC 51768 / DSM 7523 / JCM 9630 / CIP 104966 / NBRC 100827 / IM2) protein is Tyrosine--tRNA ligase 2.